The chain runs to 288 residues: Aquaporin PIP1-5 (288 aa).

Residues 1–36 are disordered; the sequence is MEGKEEDVRLGANRYSERQPIGTAAQGTEEKDYKEP. 2 helical membrane passes run 57 to 77 and 92 to 114; these read IAEF…VMGV and IAWS…SGGH. An NPA 1 motif is present at residues 116-118; it reads NPA. Transmembrane regions (helical) follow at residues 135 to 155, 177 to 197, and 211 to 231; these read LFYM…VKGF, GDGL…VFSA, and ILAP…TIPI. Residues 237 to 239 carry the NPA 2 motif; that stretch reads NPA. The chain crosses the membrane as a helical span at residues 259 to 279; the sequence is IFWVGPFIGAALAAIYHVVII.

This sequence belongs to the MIP/aquaporin (TC 1.A.8) family. PIP (TC 1.A.8.11) subfamily. Highly expressed in roots and at lower levels in anthers and silks.

Its subcellular location is the cell membrane. In terms of biological role, water channel required to facilitate the transport of water across cell membrane. In Zea mays (Maize), this protein is Aquaporin PIP1-5 (PIP1-5).